The following is a 312-amino-acid chain: Serine protease 48 (312 aa).

An N-terminal signal peptide occupies residues 1–22 (MGPAGLKVLLLLFLGAFQGSFT). The region spanning 40 to 276 (IVGGQDAALG…YQKWISAIIS (237 aa)) is the Peptidase S1 domain. The cysteines at positions 65 and 81 are disulfide-linked. Catalysis depends on charge relay system residues His-80 and Asp-126. Residue Asn-149 is glycosylated (N-linked (GlcNAc...) asparagine). 3 cysteine pairs are disulfide-bonded: Cys-160/Cys-235, Cys-190/Cys-214, and Cys-225/Cys-253. Ser-229 (charge relay system) is an active-site residue. A glycan (N-linked (GlcNAc...) asparagine) is linked at Asn-263.

This sequence belongs to the peptidase S1 family.

Its subcellular location is the secreted. This is Serine protease 48 (Prss48) from Mus musculus (Mouse).